We begin with the raw amino-acid sequence, 390 residues long: MESFLFTSESVNEGHPDKLCDQVSDAILDACLEQDPESKVACETCTKTNMVMVFGEITTKATVNYEKIVRDTCRGIGFTSPDVGLDADHCKVLVNIEQQSPDIAQGVHGHLSKKPEEIGAGDQGHMFGYATDETPELMPLTHVLATKLGAKLTEVRKNNTCPWLRPDGKTQVTVEYRNEGGAMVPVRVHTVLISTQHDETVTNEQIAKDLKEHVIKPVIPAQYMDDDTIFHLNPSGRFVIGGPHGDAGLTGRKIIIDTYGGWGAHGGGAFSGKDPTKVDRSGAYVVRQAAKSVVASGLARRCIVQVSYAIGVPEPLSVFVDTYKTGKIPDKDILALIKKNFDFRPGMIAINLDLKRGGNFRYQKTAAYGHFGRDDADFTWETVKILKPKA.

Residue Glu-9 coordinates Mg(2+). His-15 is a binding site for ATP. Glu-43 provides a ligand contact to K(+). L-methionine-binding residues include Glu-56 and Gln-99. ATP is bound by residues 167–169, 235–238, Asp-246, 252–253, Ala-269, Lys-273, and Lys-277; these read DGK, SGRF, and RK. Residue Asp-246 participates in L-methionine binding. Lys-277 is a binding site for L-methionine.

The protein belongs to the AdoMet synthase family. In terms of assembly, homotetramer. The cofactor is Mn(2+). Mg(2+) is required as a cofactor. Requires Co(2+) as cofactor. K(+) serves as cofactor.

The protein resides in the cytoplasm. It carries out the reaction L-methionine + ATP + H2O = S-adenosyl-L-methionine + phosphate + diphosphate. The protein operates within amino-acid biosynthesis; S-adenosyl-L-methionine biosynthesis; S-adenosyl-L-methionine from L-methionine: step 1/1. In terms of biological role, catalyzes the formation of S-adenosylmethionine from methionine and ATP. The reaction comprises two steps that are both catalyzed by the same enzyme: formation of S-adenosylmethionine (AdoMet) and triphosphate, and subsequent hydrolysis of the triphosphate. In Actinidia chinensis var. chinensis (Chinese soft-hair kiwi), this protein is S-adenosylmethionine synthase 2 (SAM2).